Reading from the N-terminus, the 160-residue chain is Lipoprotein signal peptidase (160 aa).

The next 2 helical transmembrane spans lie at 60–80 (IEWLIAASVLGVILAMTAFFI) and 84–104 (LPFLDTRPGLIALGVILAGTV). Residues aspartate 118 and aspartate 132 contribute to the active site. A helical transmembrane segment spans residues 128 to 148 (FNIADSCLTVGVIGLLLLYIV).

It belongs to the peptidase A8 family.

Its subcellular location is the cell membrane. The catalysed reaction is Release of signal peptides from bacterial membrane prolipoproteins. Hydrolyzes -Xaa-Yaa-Zaa-|-(S,diacylglyceryl)Cys-, in which Xaa is hydrophobic (preferably Leu), and Yaa (Ala or Ser) and Zaa (Gly or Ala) have small, neutral side chains.. The protein operates within protein modification; lipoprotein biosynthesis (signal peptide cleavage). Functionally, this protein specifically catalyzes the removal of signal peptides from prolipoproteins. The protein is Lipoprotein signal peptidase of Dehalococcoides mccartyi (strain CBDB1).